A 127-amino-acid polypeptide reads, in one-letter code: Succinate dehydrogenase cytochrome b560 subunit (127 aa).

Helical transmembrane passes span Val36 to Leu53 and Asn60 to Leu83. His88 serves as a coordination point for heme. The helical transmembrane segment at Leu109–Phe126 threads the bilayer.

Belongs to the cytochrome b560 family. As to quaternary structure, forms part of complex II containing four subunits: a 70 kDa flavoprotein (FP), a 27 kDa iron-sulfur protein (IP), a cytochrome B and a membrane-anchoring protein. Heme serves as cofactor.

It is found in the mitochondrion inner membrane. The protein operates within carbohydrate metabolism; tricarboxylic acid cycle. In terms of biological role, membrane-anchoring subunit of succinate dehydrogenase (SDH) that is involved in complex II of the mitochondrial electron transport chain and is responsible for transferring electrons from succinate to ubiquinone (coenzyme Q). In Chondrus crispus (Carrageen Irish moss), this protein is Succinate dehydrogenase cytochrome b560 subunit (SDH3).